Here is a 122-residue protein sequence, read N- to C-terminus: Large ribosomal subunit protein uL14 (122 aa).

It belongs to the universal ribosomal protein uL14 family. Part of the 50S ribosomal subunit. Forms a cluster with proteins L3 and L19. In the 70S ribosome, L14 and L19 interact and together make contacts with the 16S rRNA in bridges B5 and B8.

In terms of biological role, binds to 23S rRNA. Forms part of two intersubunit bridges in the 70S ribosome. The protein is Large ribosomal subunit protein uL14 of Acaryochloris marina (strain MBIC 11017).